A 349-amino-acid polypeptide reads, in one-letter code: Gibberellin 3-beta-dioxygenase 3 (349 aa).

The 105-residue stretch at 201 to 305 (SIQSFLQLNS…RVSAAYFAGP (105 aa)) folds into the Fe2OG dioxygenase domain. 3 residues coordinate Fe cation: histidine 226, aspartate 228, and histidine 286. Arginine 296 is an active-site residue.

It belongs to the iron/ascorbate-dependent oxidoreductase family. GA3OX subfamily. L-ascorbate serves as cofactor. It depends on Fe cation as a cofactor. In terms of tissue distribution, expressed in flower clusters and siliques.

It catalyses the reaction gibberellin A20 + 2-oxoglutarate + O2 = gibberellin A1 + succinate + CO2. Its pathway is plant hormone biosynthesis; gibberellin biosynthesis. Its function is as follows. Converts the inactive gibberellin (GA) precursors GA9 and GA20 in the bioactives gibberellins GA4 and GA1. Involved in the production of bioactive GA for reproductive development. The chain is Gibberellin 3-beta-dioxygenase 3 (GA3OX3) from Arabidopsis thaliana (Mouse-ear cress).